The following is a 161-amino-acid chain: Nucleotide-binding protein Ssed_3443 (161 aa).

The protein belongs to the YajQ family.

Functionally, nucleotide-binding protein. This is Nucleotide-binding protein Ssed_3443 from Shewanella sediminis (strain HAW-EB3).